The following is a 594-amino-acid chain: UvrABC system protein C (594 aa).

In terms of domain architecture, GIY-YIG spans 13 to 99 (NSSGVYQYFD…IKQLKPKYNI (87 aa)). One can recognise a UVR domain in the interval 205-240 (DRLIKELELKMERLSSKLRFEEALIYRDRIAKIQKI).

Belongs to the UvrC family. In terms of assembly, interacts with UvrB in an incision complex.

It is found in the cytoplasm. Its function is as follows. The UvrABC repair system catalyzes the recognition and processing of DNA lesions. UvrC both incises the 5' and 3' sides of the lesion. The N-terminal half is responsible for the 3' incision and the C-terminal half is responsible for the 5' incision. In Helicobacter pylori (strain P12), this protein is UvrABC system protein C.